A 356-amino-acid polypeptide reads, in one-letter code: Tyrosine recombinase XerS (356 aa).

A Core-binding (CB) domain is found at 16 to 121 (IMPWYVLDYY…ALSSLYKYLT (106 aa)). One can recognise a Tyr recombinase domain in the interval 169-354 (AFLDYVDKEY…VNDEQKNALD (186 aa)). Catalysis depends on residues Arg-210, Lys-234, His-306, Arg-309, and His-332. Residue Tyr-341 is the O-(3'-phospho-DNA)-tyrosine intermediate of the active site.

It belongs to the 'phage' integrase family. XerS subfamily.

It is found in the cytoplasm. Its activity is regulated as follows. FtsK is required for recombination. Site-specific tyrosine recombinase, which acts by catalyzing the cutting and rejoining of the recombining DNA molecules. Essential to convert dimers of the bacterial chromosome into monomers to permit their segregation at cell division. The chain is Tyrosine recombinase XerS from Streptococcus pyogenes serotype M5 (strain Manfredo).